A 193-amino-acid chain; its full sequence is uncharacterized protein (193 aa).

The next 4 membrane-spanning stretches (helical) occupy residues 40–56, 63–79, 86–110, and 117–138; these read LYIA…LKLI, AAGL…SSLC, CSGY…IVSC, and FIFP…FQIY. Positions 158–193 are disordered; that stretch reads TTTKLSRSSSAPDLSCPSLSTQPTSPNQSLSAYKKY.

It belongs to the chlamydial CPn_0442/CT_006/TC_0274 family.

It is found in the cell membrane. This is an uncharacterized protein from Chlamydia muridarum (strain MoPn / Nigg).